Consider the following 136-residue polypeptide: Psoriasis susceptibility 1 candidate gene 2 protein homolog (136 aa).

An N-terminal signal peptide occupies residues 1 to 22 (MILNWKLLGILVLCLHTRGISG). Positions 20–136 (ISGSEDHPSH…DLDPPREEYR (117 aa)) are disordered. Positions 23–33 (SEDHPSHPPAE) are enriched in basic and acidic residues. Pro residues-rich tracts occupy residues 44-74 (PQGP…PPWR) and 83-116 (PPEP…PPAP). The span at 117 to 136 (EVDHRPQEEPDLDPPREEYR) shows a compositional bias: basic and acidic residues.

It localises to the secreted. In Pan troglodytes (Chimpanzee), this protein is Psoriasis susceptibility 1 candidate gene 2 protein homolog (PSORS1C2).